A 90-amino-acid polypeptide reads, in one-letter code: MKTAIFTVVLALAVFAVLSFGWEANEKALSEEFTELIHEKEAASETEARECRYFWGECHDHMPCCDWLVCRYKWPITYNICVWSRTFPEK.

Positions 1-19 (MKTAIFTVVLALAVFAVLS) are cleaved as a signal peptide. A propeptide spanning residues 20–50 (FGWEANEKALSEEFTELIHEKEAASETEARE) is cleaved from the precursor. 3 cysteine pairs are disulfide-bonded: Cys-51-Cys-65, Cys-58-Cys-70, and Cys-64-Cys-81.

It belongs to the neurotoxin 10 (Hwtx-1) family. 13 (Hntx-13) subfamily. As to expression, expressed by the venom gland.

Its subcellular location is the secreted. In terms of biological role, ion channel inhibitor. The protein is U7-theraphotoxin-Hhn1c of Cyriopagopus hainanus (Chinese bird spider).